A 601-amino-acid polypeptide reads, in one-letter code: ATP-dependent lipid A-core flippase (601 aa).

The next 4 helical transmembrane spans lie at isoleucine 27–leucine 47, leucine 83–leucine 103, leucine 174–valine 194, and proline 267–leucine 287. The region spanning leucine 31–lysine 322 is the ABC transmembrane type-1 domain. The ABC transporter domain occupies leucine 354–methionine 590. Glycine 388–serine 395 serves as a coordination point for ATP.

It belongs to the ABC transporter superfamily. Lipid exporter (TC 3.A.1.106) family. As to quaternary structure, homodimer.

The protein localises to the cell inner membrane. It carries out the reaction ATP + H2O + lipid A-core oligosaccharideSide 1 = ADP + phosphate + lipid A-core oligosaccharideSide 2.. In terms of biological role, involved in lipopolysaccharide (LPS) biosynthesis. Translocates lipid A-core from the inner to the outer leaflet of the inner membrane. Transmembrane domains (TMD) form a pore in the inner membrane and the ATP-binding domain (NBD) is responsible for energy generation. The chain is ATP-dependent lipid A-core flippase from Pseudomonas fluorescens (strain ATCC BAA-477 / NRRL B-23932 / Pf-5).